Here is a 145-residue protein sequence, read N- to C-terminus: UPF0735 ACT domain-containing protein CPE1414 (145 aa).

The ACT domain occupies 69-144 (IFNMVVTHEK…GVEKVEFVAM (76 aa)).

It belongs to the UPF0735 family.

This is UPF0735 ACT domain-containing protein CPE1414 from Clostridium perfringens (strain 13 / Type A).